Consider the following 154-residue polypeptide: Proline dehydrogenase transcriptional activator (154 aa).

The region spanning 5–66 (IDATDRRILH…MLSPIRLGLI (62 aa)) is the HTH asnC-type domain. The segment at residues 24-43 (VTELARKVGLSKTPVAARIR) is a DNA-binding region (H-T-H motif).

Its function is as follows. Transcriptional activator of the putA gene in response to proline. In Rhodobacter capsulatus (Rhodopseudomonas capsulata), this protein is Proline dehydrogenase transcriptional activator (putR).